The sequence spans 610 residues: Glutamine--fructose-6-phosphate aminotransferase [isomerizing] (610 aa).

Catalysis depends on Cys-2, which acts as the Nucleophile; for GATase activity. Positions 2–221 (CGIVGAVAQR…DGDVVDLQLA (220 aa)) constitute a Glutamine amidotransferase type-2 domain. 2 consecutive SIS domains span residues 286-426 (AYKV…TRGR) and 459-600 (WADR…VDKP). The active-site For Fru-6P isomerization activity is the Lys-605.

In terms of assembly, homodimer.

Its subcellular location is the cytoplasm. The catalysed reaction is D-fructose 6-phosphate + L-glutamine = D-glucosamine 6-phosphate + L-glutamate. Functionally, catalyzes the first step in hexosamine metabolism, converting fructose-6P into glucosamine-6P using glutamine as a nitrogen source. This is Glutamine--fructose-6-phosphate aminotransferase [isomerizing] from Bordetella bronchiseptica (strain ATCC BAA-588 / NCTC 13252 / RB50) (Alcaligenes bronchisepticus).